The sequence spans 656 residues: CoB--CoM heterodisulfide reductase iron-sulfur subunit A 2 (656 aa).

152-175 (GGGVSGIQAALDLADMGFEVILVE) contributes to the FAD binding site. 4Fe-4S ferredoxin-type domains lie at 238 to 269 (KKPR…FDEG), 286 to 315 (SVFT…FDQE), 577 to 606 (IVSE…LVEK), and 610 to 639 (LVAE…QNHF). Residues Cys248, Cys251, Cys254, Cys258, Cys295, Cys298, Cys301, Cys305, Cys586, Cys589, Cys592, Cys596, Cys619, Cys622, Cys625, and Cys629 each contribute to the [4Fe-4S] cluster site.

It belongs to the HdrA family. In terms of assembly, the ferredoxin:CoB-CoM heterodisulfide reductase is composed of three subunits; HdrA, HdrB and HdrC. [4Fe-4S] cluster is required as a cofactor. FAD serves as cofactor.

Its pathway is cofactor metabolism; coenzyme M-coenzyme B heterodisulfide reduction; coenzyme B and coenzyme M from coenzyme M-coenzyme B heterodisulfide: step 1/1. Part of a complex that catalyzes the reversible reduction of CoM-S-S-CoB to the thiol-coenzymes H-S-CoM (coenzyme M) and H-S-CoB (coenzyme B). The chain is CoB--CoM heterodisulfide reductase iron-sulfur subunit A 2 (hdrA2) from Methanopyrus kandleri (strain AV19 / DSM 6324 / JCM 9639 / NBRC 100938).